The sequence spans 28 residues: Trypsin inhibitor 4 (28 aa).

Disulfide bonds link Cys2/Cys19, Cys9/Cys21, and Cys15/Cys27.

The protein belongs to the protease inhibitor I7 (squash-type serine protease inhibitor) family.

Its subcellular location is the secreted. Its function is as follows. Inhibits trypsin. The protein is Trypsin inhibitor 4 of Luffa aegyptiaca (Sponge gourd).